Consider the following 196-residue polypeptide: Large ribosomal subunit protein mL66 (196 aa).

The transit peptide at 1–34 directs the protein to the mitochondrion; that stretch reads MAALNVLVSGCGRFLRGLLTGPTVTSWARPPARG.

It belongs to the bacterial ribosomal protein bS18 family. Mitochondrion-specific ribosomal protein mL66 subfamily. Component of the mitochondrial ribosome small subunit (28S) which comprises a 12S rRNA and about 30 distinct proteins.

It localises to the mitochondrion. The polypeptide is Large ribosomal subunit protein mL66 (MRPS18A) (Bos taurus (Bovine)).